Here is a 234-residue protein sequence, read N- to C-terminus: uncharacterized protein (234 aa).

A run of 4 helical transmembrane segments spans residues 28-48, 67-87, 123-143, and 154-174; these read IVII…SIIS, FQIF…FDPI, GGVD…SGTI, and LYCI…GLLY.

This sequence belongs to the complex I subunit 2 family.

Its subcellular location is the mitochondrion membrane. This is an uncharacterized protein from Neurospora crassa (strain ATCC 24698 / 74-OR23-1A / CBS 708.71 / DSM 1257 / FGSC 987).